A 273-amino-acid chain; its full sequence is Undecaprenyl-diphosphatase (273 aa).

A run of 7 helical transmembrane segments spans residues 6 to 26, 45 to 65, 90 to 110, 116 to 136, 190 to 210, 222 to 242, and 252 to 272; these read SLLI…LPVS, AKTF…VMFW, LTLI…LLFH, LFNP…LIAA, YAAS…ATAL, GDIP…LIAI, and ISFI…YVVF.

The protein belongs to the UppP family.

The protein resides in the cell inner membrane. The catalysed reaction is di-trans,octa-cis-undecaprenyl diphosphate + H2O = di-trans,octa-cis-undecaprenyl phosphate + phosphate + H(+). Catalyzes the dephosphorylation of undecaprenyl diphosphate (UPP). Confers resistance to bacitracin. This is Undecaprenyl-diphosphatase from Escherichia coli O139:H28 (strain E24377A / ETEC).